We begin with the raw amino-acid sequence, 747 residues long: DNA repair and recombination protein RAD54-like (747 aa).

Residues 1–42 are disordered; that stretch reads MRRSLAPSQLARRKPEDRSSDDEDWQPGTVTPKKRKSSSETQ. The required for chromatin remodeling, strand pairing activities and coupling of ATPase activity stretch occupies residues 2-9; the sequence is RRSLAPSQ. Residue serine 38 is modified to Phosphoserine. The 176-residue stretch at 170–345 folds into the Helicase ATP-binding domain; it reads SRRIPGSHGC…FSLVHFVNSG (176 aa). ATP is bound at residue 183–190; it reads DEMGLGKT. The DEGH box signature appears at 296–299; that stretch reads DEGH. The region spanning 500-653 is the Helicase C-terminal domain; the sequence is VLDYILAVTR…CVVDEEQDVE (154 aa). N6-acetyllysine is present on lysine 515. Serine 572 carries the post-translational modification Phosphoserine; by NEK1.

Belongs to the SNF2/RAD54 helicase family. Homohexamer. Interacts (via N-terminus) with RAD51. Interacts with NAP1L1. Interacts with BRD9; this interaction orchestrates RAD51-RAD54 complex formation. Acetylated. Acetylation promotes interaction with BRD9, and subsequently with RAD54, which is essential for homologous recombination (HR). Post-translationally, phosphorylated. Phosphorylation at Ser-572 by NEK1 specifically in G2 phase allows efficient removal of RAD51 filaments from DNA. Hardly detectable in most tissues. Dramatically increased in thymus, spleen and testis.

The protein resides in the nucleus. It carries out the reaction ATP + H2O = ADP + phosphate + H(+). Plays an essential role in homologous recombination (HR) which is a major pathway for repairing DNA double-strand breaks (DSBs), single-stranded DNA (ssDNA) gaps, and stalled or collapsed replication forks. Acts as a molecular motor during the homology search and guides RAD51 ssDNA along a donor dsDNA thereby changing the homology search from the diffusion-based mechanism to a motor-guided mechanism. Plays also an essential role in RAD51-mediated synaptic complex formation which consists of three strands encased in a protein filament formed once homology is recognized. Once DNA strand exchange occured, dissociates RAD51 from nucleoprotein filaments formed on dsDNA. Deficiency also resulted in an increased frequency of end-to-end chromosome fusions involving telomeres compared to the controls, suggesting a putative role in telomere capping. Non-homologous end joining (NHEJ) and homologous recombination (HR) represent the two major pathways of DNA double-strand break (DSB) repair in eukaryotic cells. LIG4 and RAD54L cooperate to support cellular proliferation, repair spontaneous DSBs, and prevent chromosome and single chromatid aberrations. This Mus musculus (Mouse) protein is DNA repair and recombination protein RAD54-like (Rad54l).